The chain runs to 123 residues: 13 kDa major membrane protein (123 aa).

The protein localises to the cell membrane. This Francisella tularensis subsp. holarctica (strain LVS) protein is 13 kDa major membrane protein.